Consider the following 351-residue polypeptide: Hydroxymethylglutaryl-CoA synthase (351 aa).

Residue Asp28 coordinates (3S)-3-hydroxy-3-methylglutaryl-CoA. Glu80 functions as the Proton donor/acceptor in the catalytic mechanism. The (3S)-3-hydroxy-3-methylglutaryl-CoA site is built by Cys112 and Thr153. Residue Cys112 is the Acyl-thioester intermediate of the active site. Arg199 is a binding site for CoA. (3S)-3-hydroxy-3-methylglutaryl-CoA contacts are provided by Thr201 and His234. His234 serves as the catalytic Proton donor/acceptor. A CoA-binding site is contributed by Lys239. (3S)-3-hydroxy-3-methylglutaryl-CoA is bound by residues Arg243, Asn266, and Ser296.

The protein belongs to the thiolase-like superfamily. Archaeal HMG-CoA synthase family. Interacts with acetoacetyl-CoA thiolase that catalyzes the precedent step in the pathway and with a DUF35 protein. The acetoacetyl-CoA thiolase/HMG-CoA synthase complex channels the intermediate via a fused CoA-binding site, which allows for efficient coupling of the endergonic thiolase reaction with the exergonic HMGCS reaction.

The catalysed reaction is acetoacetyl-CoA + acetyl-CoA + H2O = (3S)-3-hydroxy-3-methylglutaryl-CoA + CoA + H(+). The protein operates within metabolic intermediate biosynthesis; (R)-mevalonate biosynthesis; (R)-mevalonate from acetyl-CoA: step 2/3. Its function is as follows. Catalyzes the condensation of acetyl-CoA with acetoacetyl-CoA to form 3-hydroxy-3-methylglutaryl-CoA (HMG-CoA). Functions in the mevalonate (MVA) pathway leading to isopentenyl diphosphate (IPP), a key precursor for the biosynthesis of isoprenoid compounds that are building blocks of archaeal membrane lipids. The polypeptide is Hydroxymethylglutaryl-CoA synthase (Picrophilus torridus (strain ATCC 700027 / DSM 9790 / JCM 10055 / NBRC 100828 / KAW 2/3)).